The primary structure comprises 431 residues: MRSYERSKAAYAEAVKLMPGGVNSPVRAFKAVKMDPIFMARGKGSKIYDIDGNEYIDYVLSWGPLILGHANDQVVEALKRVAETGTSFGAPTLIENELAKLVMERMPSIEIIRMVSSGTEATMSALRLARGYTGRNKIVKFEGCYHGHGDSLLIKAGSGVATLGLPDSPGVPETVAQHTITVPYNDLQSVRYAFEKFGEDIAAVIVEPVAGNMGVVPPEPGFLQGLRDVTNEYGALLIFDEVMTGFRVDYYSGQGYYGVTPDLTCLGKVIGGGLPVGAYGGRADIMEKIAPSGPIYQAGTLSGNPMAMTAGYETLRQLTPETYEAFKKKANRLAEGLSEAAKAYHIPHTINQAGSMIGMFFTNERVTNYETAKTSNLDLFARYYQEMANEGIFLPPSQFEGMFLSTAHTDEDIEKTIEAARRAFAKMSDCL.

N6-(pyridoxal phosphate)lysine is present on Lys268.

This sequence belongs to the class-III pyridoxal-phosphate-dependent aminotransferase family. HemL subfamily. In terms of assembly, homodimer. Pyridoxal 5'-phosphate serves as cofactor.

The protein localises to the cytoplasm. It carries out the reaction (S)-4-amino-5-oxopentanoate = 5-aminolevulinate. It functions in the pathway porphyrin-containing compound metabolism; protoporphyrin-IX biosynthesis; 5-aminolevulinate from L-glutamyl-tRNA(Glu): step 2/2. This is Glutamate-1-semialdehyde 2,1-aminomutase 2 from Anoxybacillus flavithermus (strain DSM 21510 / WK1).